Consider the following 590-residue polypeptide: MRMTTEEAFVKVLQRHGIDTAFGIIGSAFMPISDLFPRAGIRFFDCAHEGSGGMMADGFTRASGRMAMIIAQNGPGVTNFVTAVKTAYWNHTPMLVVTPQAANRTIGQGGFQEVEQMALFRDMVCWQEELRDPARIAEVLDRVIRKARRASAPAQINLPRDMFTKIIDIELPQGVDLPRPAPDAQALDRAAALLSSARFPVILNGAGVVLAEAIPDTVALAERLEAPVCTGYQHNDAFPGSHPLFAGPLGYNGSKAAMQLMSQADVVLCLGTRLNPFSTLPGYGIDYWPKAAAVIQVDINPDRIGLTRPVTLGIAADAGAVARGILARLGAQAGDQDRAERAARIATTKSRWAQELASMDHEEDDPGTSWNERARAAKPGWMSPRMAWRAITAALPPEAILSSDIGNNCAIGNAYPSFAAGRKYLAPGLFGPCGYGLPAIIGAKIACPETPVVGFAGDGAFGISVTELTAIGRADWPAITMVVFRNYQWGAEKRNSTLWYDDNFVGTELDLQVSYAGIAQACGLQGVVARTMEELTEALRKALADQAAGKTTLIEALINQELGEPFRRDAMTKPVVVAGIDPADMRPQPR.

It belongs to the TPP enzyme family. Requires Mg(2+) as cofactor. It depends on thiamine diphosphate as a cofactor.

It localises to the cytoplasm. It carries out the reaction acetyl phosphate + sulfite + H(+) = sulfoacetaldehyde + phosphate. It participates in organosulfur degradation; taurine degradation via aerobic pathway; acetyl phosphate and sulfite from taurine: step 2/2. The protein is Sulfoacetaldehyde acetyltransferase of Rhodobacter capsulatus (strain ATCC BAA-309 / NBRC 16581 / SB1003).